We begin with the raw amino-acid sequence, 186 residues long: MKTAHEVRPGNVIMFEGSPWVVQKTETTRSGRNAAIVKLKLKNLLLNSGTETTFKGEDKIDDIILDRLDCTYSYFADPMYVFMDAEYNQYDVEAENLGDAAAYIVDGMEETCQVTFYEGKAISVEMPTTIVREVIYTEPSARGDTSGKVMKPATITGGGTISVADFVKVGDKIEIDTRTGEFKKRV.

The protein belongs to the elongation factor P family.

It localises to the cytoplasm. The protein operates within protein biosynthesis; polypeptide chain elongation. Functionally, involved in peptide bond synthesis. Stimulates efficient translation and peptide-bond synthesis on native or reconstituted 70S ribosomes in vitro. Probably functions indirectly by altering the affinity of the ribosome for aminoacyl-tRNA, thus increasing their reactivity as acceptors for peptidyl transferase. The chain is Elongation factor P from Shewanella sp. (strain ANA-3).